The following is a 673-amino-acid chain: DNA ligase (673 aa).

Residues 33–37 (DAEYD), 82–83 (SL), and glutamate 115 contribute to the NAD(+) site. Lysine 117 (N6-AMP-lysine intermediate) is an active-site residue. NAD(+)-binding residues include arginine 138, glutamate 175, lysine 292, and lysine 316. Cysteine 410, cysteine 413, cysteine 428, and cysteine 434 together coordinate Zn(2+). One can recognise a BRCT domain in the interval 593 to 673 (VGDNPFKEKT…TFLAWSKPYL (81 aa)).

The protein belongs to the NAD-dependent DNA ligase family. LigA subfamily. The cofactor is Mg(2+). Mn(2+) is required as a cofactor.

It carries out the reaction NAD(+) + (deoxyribonucleotide)n-3'-hydroxyl + 5'-phospho-(deoxyribonucleotide)m = (deoxyribonucleotide)n+m + AMP + beta-nicotinamide D-nucleotide.. DNA ligase that catalyzes the formation of phosphodiester linkages between 5'-phosphoryl and 3'-hydroxyl groups in double-stranded DNA using NAD as a coenzyme and as the energy source for the reaction. It is essential for DNA replication and repair of damaged DNA. The sequence is that of DNA ligase from Pasteurella multocida (strain Pm70).